The following is a 222-amino-acid chain: Pyridoxine/pyridoxamine 5'-phosphate oxidase (222 aa).

Substrate-binding positions include 14-17 (RRNY) and Lys71. Residues 66–71 (RTVLLK), 81–82 (FT), Arg87, Lys88, and Gln110 each bind FMN. Tyr128, Arg132, and Ser136 together coordinate substrate. Residues 145–146 (QS) and Trp190 contribute to the FMN site. 196 to 198 (RLN) serves as a coordination point for substrate. Residue Arg200 coordinates FMN.

Belongs to the pyridoxamine 5'-phosphate oxidase family. Homodimer. Requires FMN as cofactor.

It carries out the reaction pyridoxamine 5'-phosphate + O2 + H2O = pyridoxal 5'-phosphate + H2O2 + NH4(+). The enzyme catalyses pyridoxine 5'-phosphate + O2 = pyridoxal 5'-phosphate + H2O2. It participates in cofactor metabolism; pyridoxal 5'-phosphate salvage; pyridoxal 5'-phosphate from pyridoxamine 5'-phosphate: step 1/1. The protein operates within cofactor metabolism; pyridoxal 5'-phosphate salvage; pyridoxal 5'-phosphate from pyridoxine 5'-phosphate: step 1/1. Functionally, catalyzes the oxidation of either pyridoxine 5'-phosphate (PNP) or pyridoxamine 5'-phosphate (PMP) into pyridoxal 5'-phosphate (PLP). The chain is Pyridoxine/pyridoxamine 5'-phosphate oxidase from Prochlorococcus marinus (strain MIT 9303).